The sequence spans 1085 residues: DNA-directed RNA polymerase subunit beta (1085 aa).

The protein belongs to the RNA polymerase beta chain family. As to quaternary structure, in plastids the minimal PEP RNA polymerase catalytic core is composed of four subunits: alpha, beta, beta', and beta''. When a (nuclear-encoded) sigma factor is associated with the core the holoenzyme is formed, which can initiate transcription.

It localises to the plastid. The protein localises to the chloroplast. It carries out the reaction RNA(n) + a ribonucleoside 5'-triphosphate = RNA(n+1) + diphosphate. In terms of biological role, DNA-dependent RNA polymerase catalyzes the transcription of DNA into RNA using the four ribonucleoside triphosphates as substrates. This Physcomitrium patens (Spreading-leaved earth moss) protein is DNA-directed RNA polymerase subunit beta.